The primary structure comprises 617 residues: E3 ubiquitin-protein ligase synoviolin (617 aa).

Topologically, residues 1–4 are cytoplasmic; that stretch reads MFRT. Residues 1 to 84 are necessary and sufficient for SEL1L interaction; the sequence is MFRTAVMMAA…EHLLERSWYA (84 aa). The tract at residues 1–251 is involved in FAM8A1 interaction; it reads MFRTAVMMAA…LFAIRPMYLA (251 aa). A helical membrane pass occupies residues 5–25; it reads AVMMAASLALTGAVVAHAYYL. Residues 26–41 lie on the Lumenal side of the membrane; it reads KHQFYPTVVYLTKSSP. A helical transmembrane segment spans residues 42-62; it reads SMAVLYIQAFVLVFLLGKVMG. Topologically, residues 63 to 98 are cytoplasmic; that stretch reads KVFFGQLRAAEMEHLLERSWYAVTETCLAFTVFRDD. A helical transmembrane segment spans residues 99–119; that stretch reads FSPRFVALFTLLLFLKCFHWL. At 120–140 the chain is on the lumenal side; that stretch reads AEDRVDFMERSPNISWLFHCR. The helical transmembrane segment at 141 to 161 threads the bilayer; that stretch reads IVSLMFLLGILDFLFVSHAYH. The Cytoplasmic segment spans residues 162–169; the sequence is SILTRGAS. A helical transmembrane segment spans residues 170-190; that stretch reads VQLVFGFEYAILMTMVLTIFI. Over 191-224 the chain is Lumenal; it reads KYVLHSVDLQSENPWDNKAVYMLYTELFTGFIKV. The chain crosses the membrane as a helical span at residues 225 to 245; it reads LLYMAFMTIMIKVHTFPLFAI. The interaction with p53/TP53 stretch occupies residues 236–270; that stretch reads KVHTFPLFAIRPMYLAMRQFKKAVTDAIMSRRAIR. The Cytoplasmic portion of the chain corresponds to 246–617; it reads RPMYLAMRQF…LQKLESPVAH (372 aa). Positions 291, 294, 307, 309, 312, 315, 326, and 329 each coordinate Zn(2+). An RING-type; atypical zinc finger spans residues 291 to 330; that stretch reads CIICREEMVTGAKRLPCNHIFHTSCLRSWFQRQQTCPTCR. Disordered regions lie at residues 337 to 375, 393 to 453, and 535 to 617; these read SLPA…GLLP, PVPP…PAPG, and RPAT…PVAH. Residues 341-375 are compositionally biased toward pro residues; sequence QSPPPPEPADQGPPPAPHPPPLLPQPPNFPQGLLP. Residues 417–451 are compositionally biased toward low complexity; the sequence is PSGAATTTAAGTSATAASATASGPGSGSAPEAGPA. Residues 480 to 535 form an HAF-H domain; necessary to form higher-order Hrd1 complexes region; it reads GFAGLTPEELRALEGHERQHLEARLQSLRNIHTLLDAAMLQINQYLTVLASLGPPR. Low complexity predominate over residues 537 to 569; sequence ATSVNSTEETATTVVAAASSTSIPSSEATTPTP. Residues 591-600 are compositionally biased toward acidic residues; sequence EMPEDGEPDA. Residue S613 is modified to Phosphoserine.

This sequence belongs to the HRD1 family. Homodimer. Interacts with p53/TP53. Interacts with HTT. Component of the HRD1 complex, which comprises at least SYNV1/HRD1, DERL1/2, FAM8A1, HERPUD1/HERP, OS9, SEL1L and UBE2J1. FAM8A1 is stabilized by interaction with SYNV1, which prevents its proteasomal degradation. OS9 and UBE2J1 recruitment to the complex may be mediated by SEL1L. SYNV1 assembles with SEL1L and FAM8A1 through its transmembrane domains, but interaction with its cytoplasmic domain is required to confer stability to FAM8A1 and enhance recruitment of HERPUD1. The HRD1 complex also associates with VIMP and may transfer misfolded proteins from the endoplasmic reticulum to VCP. May form a complex with ERLEC1, HSPA5, OS9 and SEL1L. Interacts with VCP. Interacts with UBXN6. Interacts with BAG6. Interacts with NFE2L1. Interacts (via N-terminus) with components of the pre-B cell receptor, including IGLL1 and VPREB1. Interacts with CREB3L3; this interaction leads to CREB3L3 ubiquitination and proteasomal degradation. Not N-glycosylated. In terms of processing, auto-ubiquitinated. Deubiquitinated by USP19. In terms of tissue distribution, ubiquitously expressed, with highest levels in liver and kidney (at protein level). Up-regulated in synovial tissues from patients with rheumatoid arthritis (at protein level).

The protein localises to the endoplasmic reticulum membrane. It catalyses the reaction S-ubiquitinyl-[E2 ubiquitin-conjugating enzyme]-L-cysteine + [acceptor protein]-L-lysine = [E2 ubiquitin-conjugating enzyme]-L-cysteine + N(6)-ubiquitinyl-[acceptor protein]-L-lysine.. Its pathway is protein modification; protein ubiquitination. Functionally, E3 ubiquitin-protein ligase which accepts ubiquitin specifically from endoplasmic reticulum-associated UBC7 E2 ligase and transfers it to substrates, promoting their degradation. Component of the endoplasmic reticulum quality control (ERQC) system also called ER-associated degradation (ERAD) involved in ubiquitin-dependent degradation of misfolded endoplasmic reticulum proteins. Also promotes the degradation of normal but naturally short-lived proteins such as SGK. Protects cells from ER stress-induced apoptosis. Protects neurons from apoptosis induced by polyglutamine-expanded huntingtin (HTT) or unfolded GPR37 by promoting their degradation. Sequesters p53/TP53 in the cytoplasm and promotes its degradation, thereby negatively regulating its biological function in transcription, cell cycle regulation and apoptosis. Mediates the ubiquitination and subsequent degradation of cytoplasmic NFE2L1. During the early stage of B cell development, required for degradation of the pre-B cell receptor (pre-BCR) complex, hence supporting further differentiation into mature B cells. This is E3 ubiquitin-protein ligase synoviolin from Homo sapiens (Human).